Consider the following 793-residue polypeptide: DnaJ homolog subfamily C member 10 (793 aa).

The N-terminal stretch at 1–32 (MGVWLNKDDFIRDLKRISLCLLILYVVVVVGT) is a signal peptide. The 66-residue stretch at 35 to 100 (NFYSLLGVSK…DLRKKYDKYG (66 aa)) folds into the J domain. One can recognise a Thioredoxin 1 domain in the interval 130-232 (EIITLERREF…ESLVAFAMQH (103 aa)). Cysteine 158 and cysteine 161 are disulfide-bonded. Trxb regions lie at residues 235–350 (STVT…LPDF) and 348–463 (PDFE…PQNF). Thioredoxin domains are found at residues 454–553 (HVTT…IEDL), 557–665 (SVVS…SWGL), and 671–776 (ASID…ALIY). A disulfide bond links cysteine 480 and cysteine 483. Asparagine 530 carries an N-linked (GlcNAc...) asparagine glycan. 2 disulfide bridges follow: cysteine 588-cysteine 591 and cysteine 700-cysteine 703. The short motif at 790 to 793 (KDEL) is the Prevents secretion from ER element.

Interacts with HSPA5 (via its J domain). Interacts with EDEM1. In terms of tissue distribution, ubiquitous. Particularly abundant in secretory tissues. Ubiquitous in fetal tissues and tumor tissues. Higher expression in fetal tissues than in adult tissues. Expressed in testis, pancreas, fetal thymus and fetal kidney. High expression in heart, liver, kidney, and testis. Low expression in spleen and skeletal muscle.

The protein resides in the endoplasmic reticulum lumen. Its function is as follows. Endoplasmic reticulum disulfide reductase involved both in the correct folding of proteins and degradation of misfolded proteins. Required for efficient folding of proteins in the endoplasmic reticulum by catalyzing the removal of non-native disulfide bonds formed during the folding of proteins, such as LDLR. Also involved in endoplasmic reticulum-associated degradation (ERAD) by reducing incorrect disulfide bonds in misfolded glycoproteins recognized by EDEM1. Interaction with HSPA5 is required its activity, not for the disulfide reductase activity, but to facilitate the release of DNAJC10 from its substrate. Promotes apoptotic signaling pathway in response to endoplasmic reticulum stress. This chain is DnaJ homolog subfamily C member 10 (Dnajc10), found in Mus musculus (Mouse).